The chain runs to 310 residues: Transcription initiation factor IIB (310 aa).

The TFIIB-type zinc finger occupies 9-41 (DKQTVCPECGSTELIGDYERAEVVCAHCGLVID). 4 residues coordinate Zn(2+): Cys14, Cys17, Cys33, and Cys36. A run of 2 repeats spans residues 127–210 (SELD…TREL) and 221–302 (DYVP…ELTE).

This sequence belongs to the TFIIB family.

Stabilizes TBP binding to an archaeal box-A promoter. Also responsible for recruiting RNA polymerase II to the pre-initiation complex (DNA-TBP-TFIIB). The protein is Transcription initiation factor IIB of Methanobrevibacter smithii (strain ATCC 35061 / DSM 861 / OCM 144 / PS).